A 591-amino-acid chain; its full sequence is uncharacterized protein (591 aa).

Residues 1-10 (MSIRGVGGNG) are compositionally biased toward gly residues. 4 disordered regions span residues 1 to 37 (MSIRGVGGNGNSRIPSHNGDGSNRRSQNTKGNNKVED), 110 to 135 (RSSATRAAESGSSSRTARGASSGYRE), 324 to 344 (EESGWTRESASRMEGDEAQGP), and 487 to 517 (GHYQDPRASDYDLPRASDYDLPRSPYPTPPL). The span at 11-32 (NSRIPSHNGDGSNRRSQNTKGN) shows a compositional bias: polar residues. Residues 110–132 (RSSATRAAESGSSSRTARGASSG) are compositionally biased toward low complexity. Residues 490–507 (QDPRASDYDLPRASDYDL) are compositionally biased toward basic and acidic residues.

This sequence to C.muridarum TC_0268.

This is an uncharacterized protein from Chlamydia trachomatis serovar D (strain ATCC VR-885 / DSM 19411 / UW-3/Cx).